The primary structure comprises 274 residues: Diaminopimelate epimerase (274 aa).

The substrate site is built by Asn11, Gln44, and Asn64. The active-site Proton donor is Cys73. Substrate-binding positions include 74–75 (GN), Asn157, Asn190, and 208–209 (ER). Cys217 serves as the catalytic Proton acceptor. 218-219 (GS) contributes to the substrate binding site.

The protein belongs to the diaminopimelate epimerase family. In terms of assembly, homodimer.

It localises to the cytoplasm. The enzyme catalyses (2S,6S)-2,6-diaminopimelate = meso-2,6-diaminopimelate. The protein operates within amino-acid biosynthesis; L-lysine biosynthesis via DAP pathway; DL-2,6-diaminopimelate from LL-2,6-diaminopimelate: step 1/1. In terms of biological role, catalyzes the stereoinversion of LL-2,6-diaminopimelate (L,L-DAP) to meso-diaminopimelate (meso-DAP), a precursor of L-lysine and an essential component of the bacterial peptidoglycan. This Proteus mirabilis (strain HI4320) protein is Diaminopimelate epimerase.